The following is a 440-amino-acid chain: Chromosome partition protein MukF (440 aa).

A leucine-zipper region spans residues 208–236 (LSETSGTLRELQDTLEAAGDKLQANLLRI).

Belongs to the MukF family. Interacts, and probably forms a ternary complex, with MukE and MukB via its C-terminal region. The complex formation is stimulated by calcium or magnesium. It is required for an interaction between MukE and MukB.

The protein localises to the cytoplasm. The protein resides in the nucleoid. In terms of biological role, involved in chromosome condensation, segregation and cell cycle progression. May participate in facilitating chromosome segregation by condensation DNA from both sides of a centrally located replisome during cell division. Not required for mini-F plasmid partitioning. Probably acts via its interaction with MukB and MukE. Overexpression results in anucleate cells. It has a calcium binding activity. The protein is Chromosome partition protein MukF of Escherichia coli (strain UTI89 / UPEC).